A 373-amino-acid chain; its full sequence is Chaperone protein DnaJ (373 aa).

The region spanning 4-68 (NYYQILGVSK…QTRAAYDRLG (65 aa)) is the J domain. Residues 136–214 (GIEKNISFSS…CHGMGRYHKQ (79 aa)) form a CR-type zinc finger. Zn(2+)-binding residues include cysteine 149, cysteine 152, cysteine 166, cysteine 169, cysteine 188, cysteine 191, cysteine 202, and cysteine 205. CXXCXGXG motif repeat units follow at residues 149 to 156 (CDTCHGSG), 166 to 173 (CDACSGVG), 188 to 195 (CHKCQGNG), and 202 to 209 (CKKCHGMG).

The protein belongs to the DnaJ family. In terms of assembly, homodimer. It depends on Zn(2+) as a cofactor.

The protein localises to the cytoplasm. Functionally, participates actively in the response to hyperosmotic and heat shock by preventing the aggregation of stress-denatured proteins and by disaggregating proteins, also in an autonomous, DnaK-independent fashion. Unfolded proteins bind initially to DnaJ; upon interaction with the DnaJ-bound protein, DnaK hydrolyzes its bound ATP, resulting in the formation of a stable complex. GrpE releases ADP from DnaK; ATP binding to DnaK triggers the release of the substrate protein, thus completing the reaction cycle. Several rounds of ATP-dependent interactions between DnaJ, DnaK and GrpE are required for fully efficient folding. Also involved, together with DnaK and GrpE, in the DNA replication of plasmids through activation of initiation proteins. The polypeptide is Chaperone protein DnaJ (Rickettsia peacockii (strain Rustic)).